A 52-amino-acid polypeptide reads, in one-letter code: Unknown protein from spot 415 of 2D-PAGE of etiolated coleoptile (52 aa).

This is Unknown protein from spot 415 of 2D-PAGE of etiolated coleoptile from Zea mays (Maize).